We begin with the raw amino-acid sequence, 22 residues long: thr operon leader peptide (22 aa).

It belongs to the thr operon leader peptide family.

This protein is involved in control of the biosynthesis of threonine. The protein is thr operon leader peptide of Yersinia pestis bv. Antiqua (strain Antiqua).